The sequence spans 465 residues: MSEAVPLSTRRASSAGDAPGRAPVLDIDSLDMEARGVGRVVDENGEPGKVIFVEGALPGERVTYSSFRRKPTYEQAQVVDILRPSVMRTQPKCAFFGTCGGCSMQHLDMRAQVAIKQRVLEDNLWHLAKLRAEAMFAPIHGPSWGYRYRARLTVRHVAKKGGVLVGFHEKKSSYVADMTSCEVLPPHVSAMLVPLRRLVEQLSIRDRMPQIELAVGARVTALVLRVLEPINAADEALLREFADTHRVQFWLQPKGPDTVAPFYPLDAQLDYTLPEFGIRMPFKPTDFTQVNHQINRVLVGRALRLLAPERGDRVLDLFCGIGNFTLPLARLAREVVGIEGSDALTARALENAKENGVDGHTSFACRNLFEVTADDLRALGAFDKFLVDPPREGALAVSKALAEIAQSGAGPLPARIVYVSCNPSTLARDAGLLVHEAGYRLKGAGVVNMFPHTSHVESIALFERD.

The disordered stretch occupies residues 1-24 (MSEAVPLSTRRASSAGDAPGRAPV). One can recognise a TRAM domain in the interval 16 to 80 (GDAPGRAPVL…PTYEQAQVVD (65 aa)). C93, C99, C102, and C181 together coordinate [4Fe-4S] cluster. 6 residues coordinate S-adenosyl-L-methionine: Q289, F318, N323, E339, N367, and D388. C421 acts as the Nucleophile in catalysis.

Belongs to the class I-like SAM-binding methyltransferase superfamily. RNA M5U methyltransferase family. RlmD subfamily.

It catalyses the reaction uridine(1939) in 23S rRNA + S-adenosyl-L-methionine = 5-methyluridine(1939) in 23S rRNA + S-adenosyl-L-homocysteine + H(+). Catalyzes the formation of 5-methyl-uridine at position 1939 (m5U1939) in 23S rRNA. The protein is 23S rRNA (uracil(1939)-C(5))-methyltransferase RlmD of Burkholderia mallei (strain ATCC 23344).